We begin with the raw amino-acid sequence, 85 residues long: Antitoxin VapB4 (85 aa).

This sequence belongs to the phD/YefM antitoxin family. In terms of assembly, interacts with cognate toxin VapC4.

Functionally, antitoxin component of a type II toxin-antitoxin (TA) system. Antitoxin that counteracts the effect of the VapC4 toxin. This Mycobacterium tuberculosis (strain CDC 1551 / Oshkosh) protein is Antitoxin VapB4 (vapB4).